We begin with the raw amino-acid sequence, 218 residues long: Enhancer of split M2 protein (218 aa).

Positions 1–25 are enriched in low complexity; sequence MYLDTKNLTASSTSALTAATASNSK. Disordered stretches follow at residues 1-30, 64-86, and 137-164; these read MYLD…TRRM, NTQQ…KSTP, and GRNC…SSSA. Over residues 147 to 163 the composition is skewed to low complexity; sequence SSNINSSSSSSNMNSSS.

Functionally, part of the Notch signaling pathway. This is Enhancer of split M2 protein from Drosophila melanogaster (Fruit fly).